The primary structure comprises 270 residues: A-type potassium channel modulatory protein KCNIP2 (270 aa).

A compositionally biased stretch (basic and acidic residues) spans 1-17 (MRGQGRKESLSDSRDLD). The tract at residues 1-33 (MRGQGRKESLSDSRDLDGSYDQLTGHPPGPTKK) is disordered. Ser9 carries the phosphoserine modification. Residues Cys45 and Cys46 are each lipidated (S-palmitoyl cysteine). One can recognise an EF-hand 1; degenerate domain in the interval 81–137 (FELSTVCHRPEGLEQLQEQTKFTRKELQVLYRGFKNECPSGIVNEENFKQIYSQFFP). EF-hand domains lie at 140 to 175 (DSST…ILRG), 176 to 211 (TIDD…IYDM), and 224 to 259 (APRE…DENI). Ca(2+) contacts are provided by Asp153, Asn155, Asp157, Ser159, Asp164, Asp189, Asn191, Asp193, Cys195, Glu200, Asp237, Asn239, Asp241, and Glu248. Positions 257–270 (ENIMRSMQLFDNVI) are interaction with KCND2.

It belongs to the recoverin family. As to quaternary structure, component of heteromultimeric potassium channels. Identified in potassium channel complexes containing KCND1, KCND2, KCND3, KCNIP1, KCNIP2, KCNIP3, KCNIP4, DPP6 and DPP10. The KCND2-KCNIP2 channel complex contains four KCND2 and four KCNIP2 subunits. Interacts with KCND2. Probably part of a complex consisting of KCNIP1, KCNIP2 isoform 3 and KCND2. At least isoform 2 and isoform 3 can self-associate to form homodimers and homotetramers. Isoform 3 interacts with KCNIP1 in a calcium-dependent manner. Interacts with KCND3; each KCNIP2 monomer interacts with two adjacent KCND3 subunits, through both the N-terminal inactivation ball of a KCND3 subunit and a C-terminal helix from the adjacent KCND3 subunit, clamping them together; this interaction modulates the channel gating kinetics. Post-translationally, palmitoylated. Palmitoylation enhances association with the plasma membrane. Expressed in heart ventricle with isoform 1 as most prominent form.

The protein localises to the cell membrane. Its function is as follows. Regulatory subunit of Kv4/D (Shal)-type voltage-gated rapidly inactivating A-type potassium channels. Modulates channel density, inactivation kinetics and rate of recovery from inactivation in a calcium-dependent and isoform-specific manner. Involved in KCND2 and KCND3 trafficking to the cell surface. May be required for the expression of I(To) currents in the heart. The polypeptide is A-type potassium channel modulatory protein KCNIP2 (Mustela putorius furo (European domestic ferret)).